Consider the following 377-residue polypeptide: N-acetyldiaminopimelate deacetylase (377 aa).

Aspartate 70 is a catalytic residue. Glutamate 129 serves as the catalytic Proton acceptor.

The protein belongs to the peptidase M20A family. N-acetyldiaminopimelate deacetylase subfamily.

It carries out the reaction N-acetyl-(2S,6S)-2,6-diaminopimelate + H2O = (2S,6S)-2,6-diaminopimelate + acetate. The protein operates within amino-acid biosynthesis; L-lysine biosynthesis via DAP pathway; LL-2,6-diaminopimelate from (S)-tetrahydrodipicolinate (acetylase route): step 3/3. In terms of biological role, catalyzes the conversion of N-acetyl-diaminopimelate to diaminopimelate and acetate. The polypeptide is N-acetyldiaminopimelate deacetylase (Geobacillus thermodenitrificans (strain NG80-2)).